The following is a 166-amino-acid chain: Putative universal stress protein SA1532 (166 aa).

It belongs to the universal stress protein A family.

The protein localises to the cytoplasm. In Staphylococcus aureus (strain N315), this protein is Putative universal stress protein SA1532.